Here is a 257-residue protein sequence, read N- to C-terminus: Probable oxidoreductase yanE (257 aa).

Belongs to the oxidoreductase OpS7 family.

It participates in secondary metabolite biosynthesis; terpenoid biosynthesis. Functionally, part of the gene cluster that mediates the biosynthesis of yanuthone D, a fungal isoprenoid epoxycyclohexenone that acts as an antibiotic against fungi and bacteria. The first step of the pathway is the synthesis of 6-methylsalicylic acid (6-MSA) by the polyketide synthase yanA. 6-MSA is then converted to m-cresol by the decarboxylase yanB. The cytochrome P450 monooxygenase yanC then catalyzes the oxidation of m-cresol to toluquinol. Epoxidation of toluquinol is then performed by the short chain dehydrogenase yanD, with the help of yanE, and a further prenylation by yanG leads to 7-deacetoxyyanuthone A. The next step is the hydroxylation of C-22 of 7-deacetoxyyanuthone A by the cytochrome P450 monooxygenase yanH to yield 22-deacetylyanuthone A. O-Mevalon transferase yanI then attaches mevalon to the hydroxyl group of 22-deacetylyanuthone A to produce yanuthone E. Finally, the FAD-dependent monooxygenase yanF oxidizes the hydroxyl group at C15 of yanuthone E to form yanuthone D. Furthermore, several branching points in the pathway lead to the production of yanuthones F and G from 7-deacetoxyyanuthone A; yanuthones H and I from 22-deacetylyanuthone A; and yanuthone J from yanuthone E. YanE is also involved in the synthesis of yanuthone X1 which does not have 6-methylsalicylic acid (6-MSA) as precursor. This chain is Probable oxidoreductase yanE, found in Aspergillus niger (strain ATCC 1015 / CBS 113.46 / FGSC A1144 / LSHB Ac4 / NCTC 3858a / NRRL 328 / USDA 3528.7).